We begin with the raw amino-acid sequence, 338 residues long: Ketol-acid reductoisomerase (NADP(+)) (338 aa).

The region spanning 1–181 is the KARI N-terminal Rossmann domain; it reads MNVYYDRDCD…GGGRTGIIET (181 aa). Residues 24-27, Arg-47, Ser-50, Ser-52, and 82-85 contribute to the NADP(+) site; these read YGSQ and DEFQ. His-107 is a catalytic residue. Gly-133 is an NADP(+) binding site. Residues 182 to 327 enclose the KARI C-terminal knotted domain; that stretch reads TFKDETETDL…GNLRAMMPWI (146 aa). Asp-190, Glu-194, Glu-226, and Glu-230 together coordinate Mg(2+). Ser-251 contributes to the substrate binding site.

This sequence belongs to the ketol-acid reductoisomerase family. Mg(2+) serves as cofactor.

It catalyses the reaction (2R)-2,3-dihydroxy-3-methylbutanoate + NADP(+) = (2S)-2-acetolactate + NADPH + H(+). It carries out the reaction (2R,3R)-2,3-dihydroxy-3-methylpentanoate + NADP(+) = (S)-2-ethyl-2-hydroxy-3-oxobutanoate + NADPH + H(+). The protein operates within amino-acid biosynthesis; L-isoleucine biosynthesis; L-isoleucine from 2-oxobutanoate: step 2/4. It functions in the pathway amino-acid biosynthesis; L-valine biosynthesis; L-valine from pyruvate: step 2/4. Involved in the biosynthesis of branched-chain amino acids (BCAA). Catalyzes an alkyl-migration followed by a ketol-acid reduction of (S)-2-acetolactate (S2AL) to yield (R)-2,3-dihydroxy-isovalerate. In the isomerase reaction, S2AL is rearranged via a Mg-dependent methyl migration to produce 3-hydroxy-3-methyl-2-ketobutyrate (HMKB). In the reductase reaction, this 2-ketoacid undergoes a metal-dependent reduction by NADPH to yield (R)-2,3-dihydroxy-isovalerate. This Trichlorobacter lovleyi (strain ATCC BAA-1151 / DSM 17278 / SZ) (Geobacter lovleyi) protein is Ketol-acid reductoisomerase (NADP(+)).